A 1026-amino-acid polypeptide reads, in one-letter code: Multidrug resistance protein MdtC (1026 aa).

A run of 11 helical transmembrane segments spans residues 15–35 (ILIA…LPVA), 333–353 (EVEE…FLFL), 360–380 (LIPA…MYLC), 387–407 (LSLM…IVVL), 431–451 (VGFT…PLLL), 463–483 (FAVT…TLTP), 528–548 (LVGV…IAIP), 853–873 (LILI…LYES), 897–917 (LFNA…IGIV), 953–973 (PIMM…LSDG), and 984–1004 (ITIV…TPVV).

It belongs to the resistance-nodulation-cell division (RND) (TC 2.A.6) family. MdtC subfamily. In terms of assembly, part of a tripartite efflux system composed of MdtA, MdtB and MdtC. MdtC forms a heteromultimer with MdtB.

It localises to the cell inner membrane. This chain is Multidrug resistance protein MdtC, found in Salmonella paratyphi B (strain ATCC BAA-1250 / SPB7).